We begin with the raw amino-acid sequence, 187 residues long: Ribosome maturation factor RimM (187 aa).

Residues K111 to F187 enclose the PRC barrel domain.

The protein belongs to the RimM family. In terms of assembly, binds ribosomal protein uS19.

It is found in the cytoplasm. An accessory protein needed during the final step in the assembly of 30S ribosomal subunit, possibly for assembly of the head region. Essential for efficient processing of 16S rRNA. May be needed both before and after RbfA during the maturation of 16S rRNA. It has affinity for free ribosomal 30S subunits but not for 70S ribosomes. The polypeptide is Ribosome maturation factor RimM (Albidiferax ferrireducens (strain ATCC BAA-621 / DSM 15236 / T118) (Rhodoferax ferrireducens)).